The sequence spans 393 residues: Lipid-A-disaccharide synthase (393 aa).

It belongs to the LpxB family.

The catalysed reaction is a lipid X + a UDP-2-N,3-O-bis[(3R)-3-hydroxyacyl]-alpha-D-glucosamine = a lipid A disaccharide + UDP + H(+). It functions in the pathway bacterial outer membrane biogenesis; LPS lipid A biosynthesis. Functionally, condensation of UDP-2,3-diacylglucosamine and 2,3-diacylglucosamine-1-phosphate to form lipid A disaccharide, a precursor of lipid A, a phosphorylated glycolipid that anchors the lipopolysaccharide to the outer membrane of the cell. This is Lipid-A-disaccharide synthase from Actinobacillus pleuropneumoniae serotype 5b (strain L20).